The sequence spans 103 residues: Large ribosomal subunit protein uL24 (103 aa).

It belongs to the universal ribosomal protein uL24 family. Part of the 50S ribosomal subunit.

In terms of biological role, one of two assembly initiator proteins, it binds directly to the 5'-end of the 23S rRNA, where it nucleates assembly of the 50S subunit. Functionally, one of the proteins that surrounds the polypeptide exit tunnel on the outside of the subunit. The polypeptide is Large ribosomal subunit protein uL24 (Dehalococcoides mccartyi (strain ATCC BAA-2100 / JCM 16839 / KCTC 5957 / BAV1)).